Consider the following 325-residue polypeptide: Tetraacyldisaccharide 4'-kinase (325 aa).

Residue 55 to 62 (TAGGNGKT) coordinates ATP.

It belongs to the LpxK family.

It carries out the reaction a lipid A disaccharide + ATP = a lipid IVA + ADP + H(+). It participates in glycolipid biosynthesis; lipid IV(A) biosynthesis; lipid IV(A) from (3R)-3-hydroxytetradecanoyl-[acyl-carrier-protein] and UDP-N-acetyl-alpha-D-glucosamine: step 6/6. Functionally, transfers the gamma-phosphate of ATP to the 4'-position of a tetraacyldisaccharide 1-phosphate intermediate (termed DS-1-P) to form tetraacyldisaccharide 1,4'-bis-phosphate (lipid IVA). This is Tetraacyldisaccharide 4'-kinase from Cronobacter sakazakii (strain ATCC BAA-894) (Enterobacter sakazakii).